Reading from the N-terminus, the 360-residue chain is Hydroxycarboxylic acid receptor 2 (360 aa).

Residues 1–30 (MSKQNHFLVINGKNCCVFRDENIAKVLPPV) lie on the Extracellular side of the membrane. The chain crosses the membrane as a helical span at residues 31-51 (LGLEFVFGLLGNGLALWIFCF). Residues 52–60 (HLKSWKSSR) lie on the Cytoplasmic side of the membrane. A helical membrane pass occupies residues 61 to 81 (IFLFNLAVADFLLIICLPFLT). Topologically, residues 82-98 (DNYVQNWDWRFGSIPCR) are extracellular. Cys97 and Cys174 are joined by a disulfide. Residues 99–119 (VMLFMLAMNRQGSIIFLTVVA) form a helical membrane-spanning segment. Topologically, residues 120-140 (VDRYFRVVHPHHFLNKISNRT) are cytoplasmic. The chain crosses the membrane as a helical span at residues 141–161 (AAIISCFLWGITIGLTVHLLY). Residues 162-189 (TDMMTRNGDANLCSSFSICYTFRWHDAM) lie on the Extracellular side of the membrane. A helical transmembrane segment spans residues 190 to 210 (FLLEFFLPLGIILFCSGRIIW). The Cytoplasmic segment spans residues 211-226 (SLRQRQMDRHVKIKRA). The helical transmembrane segment at 227 to 247 (INFIMVVAIVFVICFLPSVAV) threads the bilayer. Topologically, residues 248–270 (RIRIFWLLYKHNVRNCDIYSSVD) are extracellular. The chain crosses the membrane as a helical span at residues 271–291 (LAFFTTLSFTYMNSMLDPVVY). Residues 292–360 (YFSSPSFPNF…SPPYLASTSR (69 aa)) lie on the Cytoplasmic side of the membrane. The disordered stretch occupies residues 320–360 (NNRSTSVELTGDPSTIRSIPGALMTDPSEPGSPPYLASTSR). Polar residues predominate over residues 321–336 (NRSTSVELTGDPSTIR). Ser325 is modified (phosphoserine).

Belongs to the G-protein coupled receptor 1 family. Expressed in adipose tissue, lung and spleen.

The protein localises to the cell membrane. Functionally, acts as a high affinity receptor for both nicotinic acid (also known as niacin) and (D)-beta-hydroxybutyrate and mediates increased adiponectin secretion and decreased lipolysis through G(i)-protein-mediated inhibition of adenylyl cyclase. This pharmacological effect requires nicotinic acid doses that are much higher than those provided by a normal diet. Mediates nicotinic acid-induced apoptosis in mature neutrophils. Receptor activation by nicotinic acid results in reduced cAMP levels which may affect activity of cAMP-dependent protein kinase A and phosphorylation of target proteins, leading to neutrophil apoptosis. The rank order of potency for the displacement of nicotinic acid binding is 5-methyl pyrazole-3-carboxylic acid = pyridine-3-acetic acid &gt; acifran &gt; 5-methyl nicotinic acid = acipimox &gt;&gt; nicotinuric acid = nicotinamide. The sequence is that of Hydroxycarboxylic acid receptor 2 (Hcar2) from Rattus norvegicus (Rat).